A 282-amino-acid polypeptide reads, in one-letter code: Putative hydrolase Bamb_4846 (282 aa).

Residues Glu-124, Glu-126, and Asp-155 each coordinate Mg(2+).

This sequence belongs to the FAH family. Requires Mg(2+) as cofactor.

The polypeptide is Putative hydrolase Bamb_4846 (Burkholderia ambifaria (strain ATCC BAA-244 / DSM 16087 / CCUG 44356 / LMG 19182 / AMMD) (Burkholderia cepacia (strain AMMD))).